The following is a 381-amino-acid chain: Cytochrome b (381 aa).

Helical transmembrane passes span 34–54 (FGSLLGLCLIMQIITGLFLAM), 78–99 (WLMRNIHAYGASFFFICIYLHI), 114–134 (WNIGVVLLFLLMATAFVGYVL), and 179–199 (FFAFHFLLPFLILALSVIHIL). Heme b is bound by residues H84 and H98. Positions 183 and 197 each coordinate heme b. H202 is an a ubiquinone binding site. 4 helical membrane-spanning segments follow: residues 227–247 (YKDLFGFLIVITLLATLALFM), 289–309 (LGGVLALLFSIFILLLVPLLH), 321–341 (LTQIFFWSLVTNAIILTWIGG), and 348–368 (FIMVGQIASVAYFSLFLFVIP).

Belongs to the cytochrome b family. In terms of assembly, the cytochrome bc1 complex contains 3 respiratory subunits (MT-CYB, CYC1 and UQCRFS1), 2 core proteins (UQCRC1 and UQCRC2) and probably 6 low-molecular weight proteins. Requires heme b as cofactor.

It localises to the mitochondrion inner membrane. Component of the ubiquinol-cytochrome c reductase complex (complex III or cytochrome b-c1 complex) that is part of the mitochondrial respiratory chain. The b-c1 complex mediates electron transfer from ubiquinol to cytochrome c. Contributes to the generation of a proton gradient across the mitochondrial membrane that is then used for ATP synthesis. The polypeptide is Cytochrome b (mt-cyb) (Scyliorhinus canicula (Small-spotted catshark)).